Consider the following 375-residue polypeptide: tRNA-specific 2-thiouridylase MnmA (375 aa).

ATP contacts are provided by residues 12–19 and M38; that span reads GMSGGVDS. Positions 98-100 are interaction with target base in tRNA; that stretch reads NPD. C103 serves as the catalytic Nucleophile. C103 and C200 are oxidised to a cystine. G127 lines the ATP pocket. An interaction with tRNA region spans residues 150 to 152; that stretch reads KDQ. C200 functions as the Cysteine persulfide intermediate in the catalytic mechanism. An interaction with tRNA region spans residues 312–313; it reads RY.

The protein belongs to the MnmA/TRMU family.

The protein localises to the cytoplasm. It catalyses the reaction S-sulfanyl-L-cysteinyl-[protein] + uridine(34) in tRNA + AH2 + ATP = 2-thiouridine(34) in tRNA + L-cysteinyl-[protein] + A + AMP + diphosphate + H(+). In terms of biological role, catalyzes the 2-thiolation of uridine at the wobble position (U34) of tRNA, leading to the formation of s(2)U34. The chain is tRNA-specific 2-thiouridylase MnmA from Lactobacillus delbrueckii subsp. bulgaricus (strain ATCC 11842 / DSM 20081 / BCRC 10696 / JCM 1002 / NBRC 13953 / NCIMB 11778 / NCTC 12712 / WDCM 00102 / Lb 14).